A 202-amino-acid polypeptide reads, in one-letter code: Protein lin-28 homolog A (202 aa).

2 disordered regions span residues 1 to 33 (MPPANPHLNHTGGCTKTEEEEAASSEEDSGSFH) and 100 to 128 (SLQVTGPGGAPCVGSEKKPKGTQKRRSKG). A compositionally biased stretch (acidic residues) spans 18–29 (EEEEAASSEEDS). A CSD domain is found at 33-106 (HGSGVCKWFN…GLESLQVTGP (74 aa)). The flexible linker stretch occupies residues 107-130 (GGAPCVGSEKKPKGTQKRRSKGDR). 2 CCHC-type zinc fingers span residues 129 to 146 (DRCFNCGGPNHHAKECQL) and 151 to 168 (KKCHFCQSISHMVANCPI). 8 residues coordinate Zn(2+): Cys-131, Cys-134, His-139, Cys-144, Cys-153, Cys-156, His-161, and Cys-166. The tract at residues 170 to 202 (AQQLSPGSQGKSTTSTGEEEDMSHTPLLPESTD) is disordered. Residues 171–185 (QQLSPGSQGKSTTST) are compositionally biased toward polar residues. Ser-174 is subject to Phosphoserine.

The protein belongs to the lin-28 family. As to quaternary structure, monomer.

The protein resides in the cytoplasm. It localises to the rough endoplasmic reticulum. Its subcellular location is the P-body. The protein localises to the stress granule. It is found in the nucleus. The protein resides in the nucleolus. Functionally, RNA-binding protein that inhibits processing of pre-let-7 miRNAs and regulates translation of mRNAs that control developmental timing, pluripotency and metabolism. Seems to recognize a common structural G-quartet (G4) feature in its miRNA and mRNA targets. 'Translational enhancer' that drives specific mRNAs to polysomes and increases the efficiency of protein synthesis. Its association with the translational machinery and target mRNAs results in an increased number of initiation events per molecule of mRNA and, indirectly, in mRNA stabilization. Suppressor of microRNA (miRNA) biogenesis, including that of let-7. Binds specific target miRNA precursors (pre-miRNAs), recognizing an 5'-GGAG-3' motif found in their terminal loop, and recruits uridylyltransferase. This results in the terminal uridylation of target pre-miRNAs. Uridylated pre-miRNAs fail to be processed by Dicer and undergo degradation. Localized to the periendoplasmic reticulum area, binds to a large number of spliced mRNAs and inhibits the translation of mRNAs destined for the ER, reducing the synthesis of transmembrane proteins, ER or Golgi lumen proteins, and secretory proteins. Binds to and enhances the translation of mRNAs for several metabolic enzymes, increasing glycolysis and oxidative phosphorylation. Which, with the let-7 repression may enhance tissue repair in adult tissue. The protein is Protein lin-28 homolog A (lin28a) of Danio rerio (Zebrafish).